Consider the following 585-residue polypeptide: Arginine--tRNA ligase (585 aa).

The 'HIGH' region signature appears at proline 127–histidine 137.

The protein belongs to the class-I aminoacyl-tRNA synthetase family. As to quaternary structure, monomer.

It localises to the cytoplasm. It catalyses the reaction tRNA(Arg) + L-arginine + ATP = L-arginyl-tRNA(Arg) + AMP + diphosphate. This is Arginine--tRNA ligase from Borrelia duttonii (strain Ly).